Reading from the N-terminus, the 160-residue chain is Transcriptional repressor NrdR (160 aa).

Residues 3-34 (CPFCGHADTQVVDSRVSEEGDTIRRRRRCLSC) fold into a zinc finger. One can recognise an ATP-cone domain in the interval 49-139 (PTVVKRDGSR…VYKSFEDIGE (91 aa)).

This sequence belongs to the NrdR family. Zn(2+) is required as a cofactor.

Its function is as follows. Negatively regulates transcription of bacterial ribonucleotide reductase nrd genes and operons by binding to NrdR-boxes. The chain is Transcriptional repressor NrdR from Bordetella avium (strain 197N).